A 218-amino-acid chain; its full sequence is Putative pre-16S rRNA nuclease (218 aa).

It belongs to the YqgF nuclease family.

It is found in the cytoplasm. Functionally, could be a nuclease involved in processing of the 5'-end of pre-16S rRNA. The polypeptide is Putative pre-16S rRNA nuclease (Thermotoga maritima (strain ATCC 43589 / DSM 3109 / JCM 10099 / NBRC 100826 / MSB8)).